Here is a 302-residue protein sequence, read N- to C-terminus: Lipoyl synthase (302 aa).

[4Fe-4S] cluster-binding residues include Cys-44, Cys-49, Cys-55, Cys-70, Cys-74, Cys-77, and Ser-283. A Radical SAM core domain is found at 56–272 (WSKKHATVMI…AKVARSKGFL (217 aa)).

This sequence belongs to the radical SAM superfamily. Lipoyl synthase family. The cofactor is [4Fe-4S] cluster.

The protein resides in the cytoplasm. It carries out the reaction [[Fe-S] cluster scaffold protein carrying a second [4Fe-4S](2+) cluster] + N(6)-octanoyl-L-lysyl-[protein] + 2 oxidized [2Fe-2S]-[ferredoxin] + 2 S-adenosyl-L-methionine + 4 H(+) = [[Fe-S] cluster scaffold protein] + N(6)-[(R)-dihydrolipoyl]-L-lysyl-[protein] + 4 Fe(3+) + 2 hydrogen sulfide + 2 5'-deoxyadenosine + 2 L-methionine + 2 reduced [2Fe-2S]-[ferredoxin]. The protein operates within protein modification; protein lipoylation via endogenous pathway; protein N(6)-(lipoyl)lysine from octanoyl-[acyl-carrier-protein]: step 2/2. Its function is as follows. Catalyzes the radical-mediated insertion of two sulfur atoms into the C-6 and C-8 positions of the octanoyl moiety bound to the lipoyl domains of lipoate-dependent enzymes, thereby converting the octanoylated domains into lipoylated derivatives. This is Lipoyl synthase from Orientia tsutsugamushi (strain Boryong) (Rickettsia tsutsugamushi).